Here is a 123-residue protein sequence, read N- to C-terminus: Small ribosomal subunit protein uS13 (123 aa).

This sequence belongs to the universal ribosomal protein uS13 family. Part of the 30S ribosomal subunit. Forms a loose heterodimer with protein S19. Forms two bridges to the 50S subunit in the 70S ribosome.

Located at the top of the head of the 30S subunit, it contacts several helices of the 16S rRNA. In the 70S ribosome it contacts the 23S rRNA (bridge B1a) and protein L5 of the 50S subunit (bridge B1b), connecting the 2 subunits; these bridges are implicated in subunit movement. Contacts the tRNAs in the A and P-sites. This is Small ribosomal subunit protein uS13 from Neorickettsia sennetsu (strain ATCC VR-367 / Miyayama) (Ehrlichia sennetsu).